Here is a 225-residue protein sequence, read N- to C-terminus: Thymidine kinase (225 aa).

15-22 (GSMFSGKT) is an ATP binding site. The segment at 85–110 (KKQNHRTTTQCRSGDGTNNPGGVIPS) is disordered. Residues 90 to 104 (RTTTQCRSGDGTNNP) show a composition bias toward polar residues. 121-124 (DEAN) contributes to the ATP binding site. E122 acts as the Proton acceptor in catalysis. Positions 178, 181, 216, and 219 each coordinate Zn(2+).

The protein belongs to the thymidine kinase family. Homotetramer.

The protein resides in the cytoplasm. The catalysed reaction is thymidine + ATP = dTMP + ADP + H(+). The polypeptide is Thymidine kinase (Haloquadratum walsbyi (strain DSM 16790 / HBSQ001)).